Reading from the N-terminus, the 464-residue chain is Vitamin D3 hydroxylase-associated protein (464 aa).

Active-site charge relay system residues include Lys-150 and Ser-225. Ser-249 acts as the Acyl-ester intermediate in catalysis.

This sequence belongs to the amidase family. As to expression, kidney.

It is found in the mitochondrion inner membrane. May have a vitamin D3 hydroxylase regulatory function. The protein is Vitamin D3 hydroxylase-associated protein of Gallus gallus (Chicken).